A 119-amino-acid chain; its full sequence is Ribonuclease P protein component (119 aa).

This sequence belongs to the RnpA family. Consists of a catalytic RNA component (M1 or rnpB) and a protein subunit.

The enzyme catalyses Endonucleolytic cleavage of RNA, removing 5'-extranucleotides from tRNA precursor.. Its function is as follows. RNaseP catalyzes the removal of the 5'-leader sequence from pre-tRNA to produce the mature 5'-terminus. It can also cleave other RNA substrates such as 4.5S RNA. The protein component plays an auxiliary but essential role in vivo by binding to the 5'-leader sequence and broadening the substrate specificity of the ribozyme. This is Ribonuclease P protein component from Bifidobacterium longum (strain DJO10A).